The sequence spans 579 residues: MPALRKHPQTATKHLFVTGGVVSSLGKGLTGSSLGQLLTARGLQVTMQKLDPYLNVDPGTMNPFQHGEVFVTEDGAETDLDVGHYERFLDRNLSGSANVTTGQIYSSVIAKERRGEYLGDTVQVIPHITDEIKSRIVAMAAPDEHGNRPDVVITEVGGTVGDIESLPFLEAARQVRHEVGRENCFFLHCSLVPYMAPSGELKTKPTQHSVAALRSIGIQPDALILRCDRDVPEALKNKIALMCDVDIDGVISTPDAPSIYDIPKVLHREELDAYVVRRLNLPFRDVDWTQWNDLLKRVHEPHETVRIALVGKYIDLSDAYLSVTEALRAGGFFHHAKVEMRWVASDDCELDSGAAAALADVDGVLIPGGFGIRGIEGKIGAISYARKRGLPVLGLCLGLQCIVIEAARSVGITGANSAEFDPATPDPVISTMADQRDAVAGEADLGGTMRLGAYPAVLEEDSIVARAYQATEVSERHRHRYEVNNAYRDRIAESGLRFSGTSPDGHLVEFVEYDAEQHPFLVGTQAHPELKSRPTRPHPLFAAFIGAALDYKAAERLPVEIPEQRSNGVELLQEPASRG.

The amidoligase domain stretch occupies residues 1 to 281 (MPALRKHPQT…DAYVVRRLNL (281 aa)). Ser23 lines the CTP pocket. Ser23 lines the UTP pocket. Residues 24–29 (SLGKGL) and Asp81 contribute to the ATP site. Mg(2+) contacts are provided by Asp81 and Glu155. CTP is bound by residues 162-164 (DIE), 202-207 (KTKPTQ), and Lys238. UTP contacts are provided by residues 202 to 207 (KTKPTQ) and Lys238. A Glutamine amidotransferase type-1 domain is found at 306–554 (RIALVGKYID…IGAALDYKAA (249 aa)). Residue Gly369 participates in L-glutamine binding. Cys396 acts as the Nucleophile; for glutamine hydrolysis in catalysis. Residues 397–400 (LGLQ), Glu419, and Arg480 contribute to the L-glutamine site. Catalysis depends on residues His527 and Glu529.

This sequence belongs to the CTP synthase family. Homotetramer.

The catalysed reaction is UTP + L-glutamine + ATP + H2O = CTP + L-glutamate + ADP + phosphate + 2 H(+). It catalyses the reaction L-glutamine + H2O = L-glutamate + NH4(+). It carries out the reaction UTP + NH4(+) + ATP = CTP + ADP + phosphate + 2 H(+). Its pathway is pyrimidine metabolism; CTP biosynthesis via de novo pathway; CTP from UDP: step 2/2. With respect to regulation, allosterically activated by GTP, when glutamine is the substrate; GTP has no effect on the reaction when ammonia is the substrate. The allosteric effector GTP functions by stabilizing the protein conformation that binds the tetrahedral intermediate(s) formed during glutamine hydrolysis. Inhibited by the product CTP, via allosteric rather than competitive inhibition. Catalyzes the ATP-dependent amination of UTP to CTP with either L-glutamine or ammonia as the source of nitrogen. Regulates intracellular CTP levels through interactions with the four ribonucleotide triphosphates. This chain is CTP synthase, found in Mycobacterium sp. (strain JLS).